Reading from the N-terminus, the 66-residue chain is Large ribosomal subunit protein uL29 (66 aa).

It belongs to the universal ribosomal protein uL29 family.

The chain is Large ribosomal subunit protein uL29 from Fervidobacterium nodosum (strain ATCC 35602 / DSM 5306 / Rt17-B1).